A 295-amino-acid chain; its full sequence is Phosphoribosylaminoimidazole-succinocarboxamide synthase (295 aa).

It belongs to the SAICAR synthetase family.

The enzyme catalyses 5-amino-1-(5-phospho-D-ribosyl)imidazole-4-carboxylate + L-aspartate + ATP = (2S)-2-[5-amino-1-(5-phospho-beta-D-ribosyl)imidazole-4-carboxamido]succinate + ADP + phosphate + 2 H(+). It functions in the pathway purine metabolism; IMP biosynthesis via de novo pathway; 5-amino-1-(5-phospho-D-ribosyl)imidazole-4-carboxamide from 5-amino-1-(5-phospho-D-ribosyl)imidazole-4-carboxylate: step 1/2. The polypeptide is Phosphoribosylaminoimidazole-succinocarboxamide synthase (Nitrosomonas europaea (strain ATCC 19718 / CIP 103999 / KCTC 2705 / NBRC 14298)).